The primary structure comprises 485 residues: Glycogen synthase (485 aa).

Lys-15 is an ADP-alpha-D-glucose binding site.

It belongs to the glycosyltransferase 1 family. Bacterial/plant glycogen synthase subfamily.

The catalysed reaction is [(1-&gt;4)-alpha-D-glucosyl](n) + ADP-alpha-D-glucose = [(1-&gt;4)-alpha-D-glucosyl](n+1) + ADP + H(+). Its pathway is glycan biosynthesis; glycogen biosynthesis. Its function is as follows. Synthesizes alpha-1,4-glucan chains using ADP-glucose. In Geobacillus stearothermophilus (Bacillus stearothermophilus), this protein is Glycogen synthase (glgA).